A 613-amino-acid polypeptide reads, in one-letter code: DNA mismatch repair protein MutL (613 aa).

Residues Glu364–Ala393 form a disordered region.

Belongs to the DNA mismatch repair MutL/HexB family.

This protein is involved in the repair of mismatches in DNA. It is required for dam-dependent methyl-directed DNA mismatch repair. May act as a 'molecular matchmaker', a protein that promotes the formation of a stable complex between two or more DNA-binding proteins in an ATP-dependent manner without itself being part of a final effector complex. In Enterobacter sp. (strain 638), this protein is DNA mismatch repair protein MutL.